The following is a 762-amino-acid chain: Endonuclease MutS2 (762 aa).

333 to 340 contacts ATP; the sequence is GVNAGGKT. Residues 688 to 762 form the Smr domain; the sequence is LDLRGQRSEE…GGSGVKIVKL (75 aa).

Belongs to the DNA mismatch repair MutS family. MutS2 subfamily. In terms of assembly, homodimer. Binds to stalled ribosomes, contacting rRNA.

In terms of biological role, endonuclease that is involved in the suppression of homologous recombination and thus may have a key role in the control of bacterial genetic diversity. Acts as a ribosome collision sensor, splitting the ribosome into its 2 subunits. Detects stalled/collided 70S ribosomes which it binds and splits by an ATP-hydrolysis driven conformational change. Acts upstream of the ribosome quality control system (RQC), a ribosome-associated complex that mediates the extraction of incompletely synthesized nascent chains from stalled ribosomes and their subsequent degradation. Probably generates substrates for RQC. The protein is Endonuclease MutS2 of Helicobacter pylori (strain J99 / ATCC 700824) (Campylobacter pylori J99).